The primary structure comprises 397 residues: Elongation factor Tu (397 aa).

In terms of domain architecture, tr-type G spans 10-206 (KPHVNIGTIG…AVDSYIPTPE (197 aa)). The interval 19 to 26 (GHVDHGKT) is G1. 19–26 (GHVDHGKT) lines the GTP pocket. A Mg(2+)-binding site is contributed by Thr26. Residues 60–64 (GITIN) form a G2 region. The G3 stretch occupies residues 81–84 (DCPG). GTP-binding positions include 81–85 (DCPGH) and 136–139 (NKAD). Residues 136 to 139 (NKAD) are G4. Positions 174–176 (SAL) are G5.

The protein belongs to the TRAFAC class translation factor GTPase superfamily. Classic translation factor GTPase family. EF-Tu/EF-1A subfamily. Monomer.

The protein resides in the cytoplasm. It catalyses the reaction GTP + H2O = GDP + phosphate + H(+). Functionally, GTP hydrolase that promotes the GTP-dependent binding of aminoacyl-tRNA to the A-site of ribosomes during protein biosynthesis. This Clostridium beijerinckii (strain ATCC 51743 / NCIMB 8052) (Clostridium acetobutylicum) protein is Elongation factor Tu.